The primary structure comprises 399 residues: Ankyrin repeat domain-containing protein 65 (399 aa).

10 ANK repeats span residues 40–69 (QGWG…SVEE), 73–102 (AGRT…PVGA), 106–135 (AGRT…SAAA), 139–168 (TGLT…PGPA), 176–205 (RGWT…GLDG), 207–231 (LLVA…RVDA), 235–264 (AGAT…DPGI), 268–297 (HGRS…EVDA), 301–330 (LGLT…QVDA), and 334–363 (LRKT…SPTL). The disordered stretch occupies residues 377 to 399 (DLPQALPELGGGEKECEGIESTG).

This Homo sapiens (Human) protein is Ankyrin repeat domain-containing protein 65 (ANKRD65).